A 313-amino-acid chain; its full sequence is D-alanine--D-alanine ligase (313 aa).

One can recognise an ATP-grasp domain in the interval 108 to 308; that stretch reads KLVWQQTGVP…YSELVVKVLS (201 aa). 138–193 is an ATP binding site; sequence VAKLGLPLFVKPASEGSSVAVLKVKTADALPAALAEAATHDKIVIVEKSIEGGGEY. Mg(2+) contacts are provided by aspartate 262, glutamate 275, and asparagine 277.

Belongs to the D-alanine--D-alanine ligase family. Mg(2+) is required as a cofactor. The cofactor is Mn(2+).

The protein resides in the cytoplasm. The catalysed reaction is 2 D-alanine + ATP = D-alanyl-D-alanine + ADP + phosphate + H(+). It functions in the pathway cell wall biogenesis; peptidoglycan biosynthesis. Functionally, cell wall formation. This chain is D-alanine--D-alanine ligase, found in Burkholderia cenocepacia (strain HI2424).